Reading from the N-terminus, the 278-residue chain is Adenosylcobinamide-GDP ribazoletransferase (278 aa).

A run of 6 helical transmembrane segments spans residues 44 to 64, 69 to 89, 121 to 141, 161 to 181, 204 to 224, and 227 to 247; these read GIGV…QLLL, FTPL…TGGF, AFGA…LALL, VCAA…VMIW, GGLA…SLAL, and INLI…LRFF.

This sequence belongs to the CobS family. Mg(2+) is required as a cofactor.

The protein localises to the cell inner membrane. The catalysed reaction is alpha-ribazole + adenosylcob(III)inamide-GDP = adenosylcob(III)alamin + GMP + H(+). The enzyme catalyses alpha-ribazole 5'-phosphate + adenosylcob(III)inamide-GDP = adenosylcob(III)alamin 5'-phosphate + GMP + H(+). It participates in cofactor biosynthesis; adenosylcobalamin biosynthesis; adenosylcobalamin from cob(II)yrinate a,c-diamide: step 7/7. Joins adenosylcobinamide-GDP and alpha-ribazole to generate adenosylcobalamin (Ado-cobalamin). Also synthesizes adenosylcobalamin 5'-phosphate from adenosylcobinamide-GDP and alpha-ribazole 5'-phosphate. The chain is Adenosylcobinamide-GDP ribazoletransferase from Polaromonas naphthalenivorans (strain CJ2).